The primary structure comprises 338 residues: MQFIDEVKIHVQSGHGGAGCVSFRREKFIPFGGPNGGDGGRGGDVIFRVDSNLSTLLDLRYRPHLKAGSGKNGMGKDRHGAGGEDLVIPVPPGTIIKDAETGEILADLVTAGEEIVLLKGGRGGQGNARFATSTNRAPKFAQPGEPEEQRWLRLELKLLADVGLLGFPNVGKSSFITRVSAARPKIADYPFTTLKPNLGVVPYKNYRSFVIADIPGIIEGASEGAGLGHRFLKHVERTTVLLHVLDLSWMPDRDPIREYEALNRELALFSPELADKRQIVVVNKMDLPAVRENLPAVLPWFRERGLAVFPLSAATGEGISPLLDEIARSLWGKDEEEW.

In terms of domain architecture, Obg spans 1–159 (MQFIDEVKIH…RWLRLELKLL (159 aa)). The OBG-type G domain occupies 160–331 (ADVGLLGFPN…LLDEIARSLW (172 aa)). GTP contacts are provided by residues 166 to 173 (GFPNVGKS), 191 to 195 (FTTLK), 213 to 216 (DIPG), 283 to 286 (NKMD), and 312 to 314 (SAA). Residues Ser-173 and Thr-193 each coordinate Mg(2+).

This sequence belongs to the TRAFAC class OBG-HflX-like GTPase superfamily. OBG GTPase family. Monomer. Requires Mg(2+) as cofactor.

The protein resides in the cytoplasm. Functionally, an essential GTPase which binds GTP, GDP and possibly (p)ppGpp with moderate affinity, with high nucleotide exchange rates and a fairly low GTP hydrolysis rate. Plays a role in control of the cell cycle, stress response, ribosome biogenesis and in those bacteria that undergo differentiation, in morphogenesis control. This is GTPase Obg from Geobacter sulfurreducens (strain ATCC 51573 / DSM 12127 / PCA).